We begin with the raw amino-acid sequence, 243 residues long: Probable 2-phosphosulfolactate phosphatase (243 aa).

It belongs to the ComB family. It depends on Mg(2+) as a cofactor.

The catalysed reaction is (2R)-O-phospho-3-sulfolactate + H2O = (2R)-3-sulfolactate + phosphate. The polypeptide is Probable 2-phosphosulfolactate phosphatase (Prochlorococcus marinus (strain MIT 9313)).